A 79-amino-acid polypeptide reads, in one-letter code: Acyl carrier protein (79 aa).

The Carrier domain maps to 2-77; the sequence is ENIEQRVKKI…QAIDYVTAHL (76 aa). Residue serine 37 is modified to O-(pantetheine 4'-phosphoryl)serine.

Belongs to the acyl carrier protein (ACP) family. In terms of processing, 4'-phosphopantetheine is transferred from CoA to a specific serine of apo-ACP by AcpS. This modification is essential for activity because fatty acids are bound in thioester linkage to the sulfhydryl of the prosthetic group.

The protein localises to the cytoplasm. The protein operates within lipid metabolism; fatty acid biosynthesis. Carrier of the growing fatty acid chain in fatty acid biosynthesis. This Aromatoleum aromaticum (strain DSM 19018 / LMG 30748 / EbN1) (Azoarcus sp. (strain EbN1)) protein is Acyl carrier protein.